Consider the following 208-residue polypeptide: 3-demethoxyubiquinol 3-hydroxylase (208 aa).

The Fe cation site is built by Glu-57, Glu-87, His-90, Glu-139, Glu-171, and His-174.

Belongs to the COQ7 family. It depends on Fe cation as a cofactor.

The protein localises to the cell membrane. The enzyme catalyses a 5-methoxy-2-methyl-3-(all-trans-polyprenyl)benzene-1,4-diol + AH2 + O2 = a 3-demethylubiquinol + A + H2O. Its pathway is cofactor biosynthesis; ubiquinone biosynthesis. In terms of biological role, catalyzes the hydroxylation of 2-nonaprenyl-3-methyl-6-methoxy-1,4-benzoquinol during ubiquinone biosynthesis. This is 3-demethoxyubiquinol 3-hydroxylase from Burkholderia vietnamiensis (strain G4 / LMG 22486) (Burkholderia cepacia (strain R1808)).